The chain runs to 270 residues: S-adenosylmethionine decarboxylase proenzyme (270 aa).

Catalysis depends on serine 117, which acts as the Schiff-base intermediate with substrate; via pyruvic acid. Position 117 is a pyruvic acid (Ser); by autocatalysis (serine 117). Histidine 122 serves as the catalytic Proton acceptor; for processing activity. The active-site Proton donor; for catalytic activity is cysteine 145.

Belongs to the prokaryotic AdoMetDC family. Type 2 subfamily. In terms of assembly, heterooctamer of four alpha and four beta chains arranged as a tetramer of alpha/beta heterodimers. Requires pyruvate as cofactor. Post-translationally, is synthesized initially as an inactive proenzyme. Formation of the active enzyme involves a self-maturation process in which the active site pyruvoyl group is generated from an internal serine residue via an autocatalytic post-translational modification. Two non-identical subunits are generated from the proenzyme in this reaction, and the pyruvate is formed at the N-terminus of the alpha chain, which is derived from the carboxyl end of the proenzyme. The post-translation cleavage follows an unusual pathway, termed non-hydrolytic serinolysis, in which the side chain hydroxyl group of the serine supplies its oxygen atom to form the C-terminus of the beta chain, while the remainder of the serine residue undergoes an oxidative deamination to produce ammonia and the pyruvoyl group blocking the N-terminus of the alpha chain.

It carries out the reaction S-adenosyl-L-methionine + H(+) = S-adenosyl 3-(methylsulfanyl)propylamine + CO2. Its pathway is amine and polyamine biosynthesis; S-adenosylmethioninamine biosynthesis; S-adenosylmethioninamine from S-adenosyl-L-methionine: step 1/1. Catalyzes the decarboxylation of S-adenosylmethionine to S-adenosylmethioninamine (dcAdoMet), the propylamine donor required for the synthesis of the polyamines spermine and spermidine from the diamine putrescine. This is S-adenosylmethionine decarboxylase proenzyme from Pseudoalteromonas translucida (strain TAC 125).